Reading from the N-terminus, the 133-residue chain is Small ribosomal subunit protein uS11 (133 aa).

It belongs to the universal ribosomal protein uS11 family. Part of the 30S ribosomal subunit. Interacts with proteins S7 and S18. Binds to IF-3.

In terms of biological role, located on the platform of the 30S subunit, it bridges several disparate RNA helices of the 16S rRNA. Forms part of the Shine-Dalgarno cleft in the 70S ribosome. This chain is Small ribosomal subunit protein uS11, found in Chlamydia pneumoniae (Chlamydophila pneumoniae).